The primary structure comprises 685 residues: Diphthine--ammonia ligase (685 aa).

This sequence in the C-terminal section; belongs to the RutC family. In the N-terminal section; belongs to the Diphthine--ammonia ligase family. As to quaternary structure, interacts with elongation factor 2 (eEF-2; EFT1 or EFT2).

It is found in the cytoplasm. The enzyme catalyses diphthine-[translation elongation factor 2] + NH4(+) + ATP = diphthamide-[translation elongation factor 2] + AMP + diphosphate + H(+). It participates in protein modification; peptidyl-diphthamide biosynthesis. In terms of biological role, amidase that catalyzes the last step of diphthamide biosynthesis using ammonium and ATP. Diphthamide biosynthesis consists in the conversion of an L-histidine residue in the translation elongation factor eEF-2 (EFT1 or EFT2) to diphthamide. This is Diphthine--ammonia ligase (DPH6) from Saccharomyces cerevisiae (strain ATCC 204508 / S288c) (Baker's yeast).